A 428-amino-acid chain; its full sequence is Cell division protein FtsZ (428 aa).

GTP-binding positions include 73-77 (GGGGN), 160-162 (GTG), E191, R195, and D239. Residues 378 to 428 (NAANARVVSAPPKRTPTQTPLTNSPAPTPEPKEKSGLDIPDFLQRRRPPKN) are disordered. Polar residues predominate over residues 392 to 402 (TPTQTPLTNSP).

Belongs to the FtsZ family. In terms of assembly, homodimer. Polymerizes to form a dynamic ring structure in a strictly GTP-dependent manner. Interacts directly with several other division proteins.

It is found in the cytoplasm. In terms of biological role, essential cell division protein that forms a contractile ring structure (Z ring) at the future cell division site. The regulation of the ring assembly controls the timing and the location of cell division. One of the functions of the FtsZ ring is to recruit other cell division proteins to the septum to produce a new cell wall between the dividing cells. Binds GTP and shows GTPase activity. The polypeptide is Cell division protein FtsZ (Nostoc sp. (strain PCC 7120 / SAG 25.82 / UTEX 2576)).